Reading from the N-terminus, the 1231-residue chain is Cohesin subunit SA-2 (1231 aa).

M1 is subject to N-acetylmethionine. The segment at 1–75 is disordered; the sequence is MIAAPEIPTD…GSNRMNGHHQ (75 aa). Residues 36–48 show a composition bias toward basic residues; that stretch reads KQGKGKTCKKGKK. An SCD domain is found at 293–378; it reads FVHRYRDAIA…SRFKDRIVSM (86 aa). K607 bears the N6-acetyllysine mark. Phosphoserine is present on residues S1058, S1061, S1064, and S1065. The segment at 1062-1087 is disordered; the sequence is GMSSRGSTVRSKKSKPSTGKRKVVEG. Residues 1071-1082 are compositionally biased toward basic residues; that stretch reads RSKKSKPSTGKR. At T1112 the chain carries Phosphothreonine. Phosphoserine occurs at positions 1177 and 1178.

Belongs to the SCC3 family. In terms of assembly, interacts directly with RAD21 in cohesin complex. Cohesin complexes are composed of a heterodimer between a SMC1 protein (SMC1A or SMC1B) and SMC3, which are attached via their hinge domain, and RAD21 which link them at their heads, and one STAG protein (STAG1, STAG2 or STAG3). In cohesin complexes, STAG2 is mutually exclusive with STAG1 and STAG3. Phosphorylated by PLK1. The large dissociation of cohesin from chromosome arms during prophase is partly due to its phosphorylation.

The protein resides in the nucleus. Its subcellular location is the chromosome. The protein localises to the centromere. Functionally, component of cohesin complex, a complex required for the cohesion of sister chromatids after DNA replication. The cohesin complex apparently forms a large proteinaceous ring within which sister chromatids can be trapped. At anaphase, the complex is cleaved and dissociates from chromatin, allowing sister chromatids to segregate. The cohesin complex may also play a role in spindle pole assembly during mitosis. In Mus musculus (Mouse), this protein is Cohesin subunit SA-2 (Stag2).